A 298-amino-acid chain; its full sequence is Inosose dehydratase 1 (298 aa).

It belongs to the IolE/MocC family. Glutathione is required as a cofactor. It depends on Co(2+) as a cofactor. Mn(2+) serves as cofactor.

The enzyme catalyses scyllo-inosose = 3D-3,5/4-trihydroxycyclohexane-1,2-dione + H2O. Its pathway is polyol metabolism; myo-inositol degradation into acetyl-CoA; acetyl-CoA from myo-inositol: step 2/7. Functionally, catalyzes the dehydration of inosose (2-keto-myo-inositol, 2KMI or 2,4,6/3,5-pentahydroxycyclohexanone) to 3D-(3,5/4)-trihydroxycyclohexane-1,2-dione (D-2,3-diketo-4-deoxy-epi-inositol). This chain is Inosose dehydratase 1, found in Bacillus cereus (strain ZK / E33L).